Here is a 1502-residue protein sequence, read N- to C-terminus: MENRGQKRMEVVEELPADKRACNSQDFRPSTSGSSVQAQANDTNPGHENVDADMDTSSSASPSSRSDEEEQEEQDKEDSDYGSCDSDEEDPRQRVLQDYQRQRSSGDHGKLKSLLLNLTGETDPSGQLSRLTELCEVLSFSTEESLSSVMANMLSPVLVKLAKHENNADIMLLAIRAITYLCDVYPPSVEFLVRHDTIPALCQRLLTIEYLDVAEQCLQALEKISRDEPVACLNAGAIMAVLSFIDFFSTSIQRVAISTVVNICKQLSSESPSPFMDAVPILCTLLQYEDRQLVENVAICLTKIADQASESPAMLDQLCRHGLINESTHLLNLNSRTTLSQPVYNGVIGMLRKLSSGSALAFRTLYELNIGYSLKEIMSTYDISHSVSSTHPINACSNQVHEVLKLVIELLPASPVEDNQLASEKESFLVNQPDLLQQFGRDMLPVMIQVLNSGANVYVSYGCLSAIHKLTCLSKSGDIVELLKNTNMSSVLAGILSRKDHHVIVVALQVAEVLLEKYRDTFLNSFIKEGVFFAIEALLSSDRGQQNQGSADLSQKPVTKEIVKCLCQSFERSLSSSSQTCKIEKDSVYVLATRIKEGFFGPEVFNSEKGLTDVLQNLKNLSVALSELMTVPIDAHVLHDEKFFSIWNQIMERLNGRESVSTFEFIESGVVKSLASYLSNGLYQRKLSKGGPECDSLPFIGKRFEVFTRLLWSDGEATSSLLIQKLQNSLSSLENFPIVLSQFLKQKNSFAAIPNGRCTSYPCLKVRFLKAEGETSLRDYSQDFVTVDPLCYLDAVDQYLWPKVNIEPIDSVEAKDQAIECQSSQLQSTSISCQAESSSPMEIDSESSDASQLQGSQVEDQTQLPGQQNASSSETSSEKEDAVPRLLFRLEGLELDRSLTVYQAILLHKLKSESEATNDSKLSGPHNITYERSAQLGDSRENLFPPGSMEDDEYRPFLSYLFTHRLALRLKGSSHPPYDILFLLKSLEGMNRFLFHLISLERINAFGEGRLENLDDLRVQVRPVPHSEFVSSKLTEKLEQQLRDSFAVSTCGLPPWFNDLMDSCPCLFSFEAKSKYFRLAAFGSQKIRHHPQHLSSSNVHGEARPVTGSLPRKKFLACRENILESAAKMMELYGNQKVVIEVEYSEEVGTGLGPTLEFYTLVSRAFQNPDLGMWRNDCSFIVGKPVEHSGVLASSSGLFPRPWSGTSTTSDVLQKFVLLGTVVAKALQDGRVLDLPLSKAFYKLILGQELSSFDIHFVDPELCKTLVELQALVRRKKLFAEAHGDSGAAKCDLSFHGTKIEDLCLEFALPGYTDYDLAPYSANDMVNLDNLEEYIKGIVNATVCNGIQKQVEAFRSGFNQVFSIEHLRIFNEEELETMLCGECDLFSMNEVLDHIKFDHGYTSSSPPVEYLLQILHEFDREQQRAFLQFVTGSPRLPHGGLASLSPKLTIVRKHGSDSSDTDLPSVMTCANYLKLPPYSSKEKMKEKLIYAITEGQGSFHLS.

The segment covering 1–21 (MENRGQKRMEVVEELPADKRA) has biased composition (basic and acidic residues). Positions 1–107 (MENRGQKRME…DYQRQRSSGD (107 aa)) are disordered. Residues 22-46 (CNSQDFRPSTSGSSVQAQANDTNPG) show a composition bias toward polar residues. Positions 67–90 (DEEEQEEQDKEDSDYGSCDSDEED) are enriched in acidic residues. Basic and acidic residues predominate over residues 91–107 (PRQRVLQDYQRQRSSGD). ARM repeat units follow at residues 143–183 (EESL…YLCD), 186–226 (PPSV…KISR), 228–265 (EPVA…NICK), and 267–306 (LSSE…KIAD). Positions 833–881 (CQAESSSPMEIDSESSDASQLQGSQVEDQTQLPGQQNASSSETSSEKED) are disordered. The span at 849–875 (DASQLQGSQVEDQTQLPGQQNASSSET) shows a compositional bias: polar residues. The K-box stretch occupies residues 1022–1096 (RPVPHSEFVS…IRHHPQHLSS (75 aa)). Residues 1128–1502 (KMMELYGNQK…TEGQGSFHLS (375 aa)) enclose the HECT domain. Cysteine 1469 (glycyl thioester intermediate) is an active-site residue.

This sequence belongs to the UPL family. K-HECT subfamily.

It carries out the reaction S-ubiquitinyl-[E2 ubiquitin-conjugating enzyme]-L-cysteine + [acceptor protein]-L-lysine = [E2 ubiquitin-conjugating enzyme]-L-cysteine + N(6)-ubiquitinyl-[acceptor protein]-L-lysine.. Its pathway is protein modification; protein ubiquitination. In terms of biological role, probable E3 ubiquitin-protein ligase which mediates ubiquitination and subsequent proteasomal degradation of target proteins. The polypeptide is E3 ubiquitin-protein ligase UPL4 (UPL4) (Arabidopsis thaliana (Mouse-ear cress)).